The following is a 280-amino-acid chain: Dexamethasone-induced Ras-related protein 1 (280 aa).

An S-nitrosocysteine modification is found at C11. Position 31–38 (31–38) interacts with GTP; it reads GSSKVGKT. The short motif at 53–61 is the Effector region element; that stretch reads YTPTIEDFH. Residues 78–82 and 145–148 each bind GTP; these read DTSGN and NKGD. Cysteine methyl ester is present on C277. C277 carries S-farnesyl cysteine lipidation. Residues 278-280 constitute a propeptide, removed in mature form; the sequence is VIS.

It belongs to the small GTPase superfamily. RasD family. As to quaternary structure, forms a ternary complex with CAPON and NOS1. Component of a complex, at least composed of APBB1, RASD1/DEXRAS1 and APP. Interacts with APBB1/FE65. Forms. Post-translationally, S-nitrosylation stimulates guanine-nucleotide exchange activity. As to expression, prominently found in brain at both mRNA and protein levels. Moderate expression in testis and lung. Slightly expressed in heart, spleen, skeletal muscle, liver and kidney.

The protein resides in the cell membrane. It is found in the cytoplasm. Its subcellular location is the perinuclear region. It localises to the nucleus. Its function is as follows. Small GTPase. Negatively regulates the transcription regulation activity of the APBB1/FE65-APP complex via its interaction with APBB1/FE65. In Rattus norvegicus (Rat), this protein is Dexamethasone-induced Ras-related protein 1 (Rasd1).